Consider the following 94-residue polypeptide: Aspartyl/glutamyl-tRNA(Asn/Gln) amidotransferase subunit C (94 aa).

This sequence belongs to the GatC family. In terms of assembly, heterotrimer of A, B and C subunits.

The enzyme catalyses L-glutamyl-tRNA(Gln) + L-glutamine + ATP + H2O = L-glutaminyl-tRNA(Gln) + L-glutamate + ADP + phosphate + H(+). It catalyses the reaction L-aspartyl-tRNA(Asn) + L-glutamine + ATP + H2O = L-asparaginyl-tRNA(Asn) + L-glutamate + ADP + phosphate + 2 H(+). Its function is as follows. Allows the formation of correctly charged Asn-tRNA(Asn) or Gln-tRNA(Gln) through the transamidation of misacylated Asp-tRNA(Asn) or Glu-tRNA(Gln) in organisms which lack either or both of asparaginyl-tRNA or glutaminyl-tRNA synthetases. The reaction takes place in the presence of glutamine and ATP through an activated phospho-Asp-tRNA(Asn) or phospho-Glu-tRNA(Gln). The chain is Aspartyl/glutamyl-tRNA(Asn/Gln) amidotransferase subunit C from Opitutus terrae (strain DSM 11246 / JCM 15787 / PB90-1).